A 305-amino-acid polypeptide reads, in one-letter code: uncharacterized protein (305 aa).

Belongs to the ADP-ribosylglycohydrolase family.

This is an uncharacterized protein from Archaeoglobus fulgidus (strain ATCC 49558 / DSM 4304 / JCM 9628 / NBRC 100126 / VC-16).